The sequence spans 434 residues: Protein arginine N-methyltransferase 2 (434 aa).

The tract at residues 155-198 is disordered; the sequence is IQGEETTEEERKEEEPSNTSDIIDEQKVEQPKEDLKEDPSSNQE. The span at 178 to 193 shows a compositional bias: basic and acidic residues; it reads DEQKVEQPKEDLKEDP. The RMT2 domain occupies 193–434; sequence PSSNQETYLK…YHPEARFMDV (242 aa). S-adenosyl-L-methionine-binding positions include Tyr-200, Met-230, 258 to 263, 279 to 281, 306 to 307, and Asp-327; these read FGMGII, EAH, and WQ.

This sequence belongs to the class I-like SAM-binding methyltransferase superfamily. RMT2 methyltransferase family. Monomer.

Its subcellular location is the cytoplasm. It is found in the nucleus. Its function is as follows. S-adenosyl-L-methionine-dependent protein-arginine N-methyltransferase that methylates the delta-nitrogen atom of arginine residues to form N5-methylarginine (type IV) in target proteins. Monomethylates ribosomal protein L12. This is Protein arginine N-methyltransferase 2 from Debaryomyces hansenii (strain ATCC 36239 / CBS 767 / BCRC 21394 / JCM 1990 / NBRC 0083 / IGC 2968) (Yeast).